Here is a 383-residue protein sequence, read N- to C-terminus: Probable transcriptional repressor C1348.12 (383 aa).

The zn(2)-C6 fungal-type DNA-binding region spans cysteine 34–cysteine 60.

It localises to the nucleus. Functionally, probable transcriptional repressor of multidrug resistance genes. This chain is Probable transcriptional repressor C1348.12, found in Schizosaccharomyces pombe (strain 972 / ATCC 24843) (Fission yeast).